We begin with the raw amino-acid sequence, 503 residues long: Interferon regulatory factor 7 (503 aa).

The IRF tryptophan pentad repeat DNA-binding region spans 11–126; it reads RVLFGEWLLG…DPHKVYALSR (116 aa). The segment at 69–88 is disordered; it reads RWPPSSRGGGPPPEAETAER. K92 carries the N6-acetyllysine; by KAT2A and KAT2B modification. Disordered regions lie at residues 133–156 and 242–277; these read GPGT…GPPG and TTPS…SPSA. Residues 146-156 show a composition bias toward pro residues; sequence AVPPPQGGPPG. The segment at 284–456 is necessary for the interaction with NMI; that stretch reads PSPGALDVTI…SLVLVKLEPW (173 aa). K375 participates in a covalent cross-link: Glycyl lysine isopeptide (Lys-Gly) (interchain with G-Cter in ubiquitin). Residues K444 and K446 each participate in a glycyl lysine isopeptide (Lys-Gly) (interchain with G-Cter in SUMO) cross-link. S471, S472, and S475 each carry phosphoserine. Phosphoserine; by TBK1 and IKKE occurs at positions 477 and 479. A phosphoserine mark is found at S483, S484, and S487.

It belongs to the IRF family. Monomer. Homodimer; phosphorylation-induced. Heterodimer with IRF3. Interacts with TICAM1 and TICAM2. Interacts with MYD88 and TRAF6. Interacts with TRIM35. Interacts with NMI; the interaction is direct and leads to the inhibition of IRF7-mediated type I IFN production. Interacts with GBP4; preventing interaction between TRAF6 and IRF7, resulting in impaired TRAF6-mediated IRF7 ubiquitination. As to quaternary structure, (Microbial infection) Interacts with Epstein-Barr virus LF2 and LMP1. In terms of assembly, (Microbial infection) Interacts with rotavirus A NSP1; this interaction leads to the proteasome-dependent degradation of IRF7. (Microbial infection) Interacts with human herpes virus 8/HHV-8 proteins ORF45 and vIRF-1. As to quaternary structure, (Microbial infection) Interacts with human T-cell leukemia virus 1/HTLV-1 protein HBZ. In terms of assembly, (Microbial infection) Interacts with Seneca Valley virus protease 3C; this interaction is involved in the suppression of IRF7 expression and phosphorylation by the virus. (Microbial infection) Interacts with ebolavirus VP35; this interaction mediates the sumoylation of IRF7 and contributes to the viral inhibition of IFN-type I production. As to quaternary structure, (Microbial infection) Interacts with severe fever with thrombocytopenia syndrome virus (SFTSV) NSs; this interaction sequesters IRF7 in NSs-induced cytoplasmic inclusion bodies. In terms of assembly, (Microbial infection) Interacts with herpes virus 8/HHV-8 protein vIRF-4; this interaction prevents IRF7 dimerization and subsequent activation. (Microbial infection) Interacts with human metapneumovirus protein M2-2; this interaction prevents IRF7 phosphorlyation and subsequent TLR7/9-dependent IFN-alpha induction. Post-translationally, acetylation inhibits its DNA-binding ability and activity. In response to a viral infection, phosphorylated on Ser-477 and Ser-479 by TBK1 and IKBKE1. Phosphorylation, and subsequent activation is inhibited by vaccinia virus protein E3. In TLR7- and TLR9-mediated signaling pathway, phosphorylated by IRAK1. In terms of processing, TRAF6-mediated ubiquitination is required for IRF7 activation. TRIM35 mediates IRF7 'Lys-48'-linked polyubiquitination and subsequent proteasomal degradation. Ubiquitinated by UBE3C, leading to its degradation. Post-translationally, sumoylated by TRIM28, which inhibits its transactivation activity. (Microbial infection) Cleaved and inactivated by the protease 3C of enterovirus 71 allowing the virus to disrupt the host type I interferon production. In terms of processing, (Microbial infection) Cleaved and inactivated by the protease 3C of human enterovirus 68D (EV68) allowing the virus to disrupt the host type I interferon production. Post-translationally, 'Lys-48'-linked polyubiquitination and subsequent proteasomal degradation is NMI-dependent in response to Sendai virus infection. 'Lys-63'-linked ubiquitination by NEURL3 promotes IRF7 activation. In terms of tissue distribution, expressed predominantly in spleen, thymus and peripheral blood leukocytes.

The protein resides in the nucleus. Its subcellular location is the cytoplasm. With respect to regulation, in the absence of viral infection, maintained as a monomer in an autoinhibited state and phosphorylation disrupts this autoinhibition leading to the liberation of the DNA-binding and dimerization activities and its nuclear localization where it can activate type I IFN and ISG genes. In terms of biological role, key transcriptional regulator of type I interferon (IFN)-dependent immune responses and plays a critical role in the innate immune response against DNA and RNA viruses. Regulates the transcription of type I IFN genes (IFN-alpha and IFN-beta) and IFN-stimulated genes (ISG) by binding to an interferon-stimulated response element (ISRE) in their promoters. Can efficiently activate both the IFN-beta (IFNB) and the IFN-alpha (IFNA) genes and mediate their induction via both the virus-activated, MyD88-independent pathway and the TLR-activated, MyD88-dependent pathway. Induces transcription of ubiquitin hydrolase USP25 mRNA in response to lipopolysaccharide (LPS) or viral infection in a type I IFN-dependent manner. Required during both the early and late phases of the IFN gene induction but is more critical for the late than for the early phase. Exists in an inactive form in the cytoplasm of uninfected cells and following viral infection, double-stranded RNA (dsRNA), or toll-like receptor (TLR) signaling, becomes phosphorylated by IKBKE and TBK1 kinases. This induces a conformational change, leading to its dimerization and nuclear localization where along with other coactivators it can activate transcription of the type I IFN and ISG genes. Can also play a role in regulating adaptive immune responses by inducing PSMB9/LMP2 expression, either directly or through induction of IRF1. Binds to the Q promoter (Qp) of EBV nuclear antigen 1 a (EBNA1) and may play a role in the regulation of EBV latency. Can activate distinct gene expression programs in macrophages and regulate the anti-tumor properties of primary macrophages. This Homo sapiens (Human) protein is Interferon regulatory factor 7 (IRF7).